Consider the following 298-residue polypeptide: Junctional adhesion molecule B (298 aa).

The N-terminal stretch at 1–28 (MARSPQGLLMLLLLHYLIVALDYHKANG) is a signal peptide. Topologically, residues 29 to 236 (FSASKDHRQE…GKRMQVDVLN (208 aa)) are extracellular. The Ig-like V-type domain maps to 32 to 128 (SKDHRQEVTV…GQNLQEDKVM (97 aa)). 2 disulfides stabilise this stretch: C51-C110 and C156-C214. N99 is a glycosylation site (N-linked (GlcNAc...) asparagine). The region spanning 135–238 (PAVPACEVPT…RMQVDVLNIS (104 aa)) is the Ig-like C2-type domain. The chain crosses the membrane as a helical span at residues 237 to 257 (ISGIIATVVVVAFVISVCGLG). The Cytoplasmic portion of the chain corresponds to 258–298 (TCYAQRKGYFSKETSFQKGSPASKVTTMSENDFKHTKSFII).

Belongs to the immunoglobulin superfamily. Post-translationally, the expression in Sertoli cells is regulated by TGFB3 through ubiquitin-mediated proteasomal degradation. Expressed by bone marrow stromal cells (at protein level). Expressed in skin (at protein level). Expressed in testis by Sertoli cells (at protein level). Expressed by dorsal root ganglion and spinal cord neurons.

The protein localises to the cell membrane. The protein resides in the cell junction. Its subcellular location is the tight junction. Junctional adhesion protein that mediates heterotypic cell-cell interactions with its cognate receptor JAM3 to regulate different cellular processes. Plays a role in homing and mobilization of hematopoietic stem and progenitor cells within the bone marrow. At the surface of bone marrow stromal cells, it contributes to the retention of the hematopoietic stem and progenitor cells expressing JAM3. Plays a central role in leukocytes extravasation by facilitating not only transmigration but also tethering and rolling of leukocytes along the endothelium. Tethering and rolling of leukocytes are dependent on the binding by JAM2 of the integrin alpha-4/beta-1. Plays a role in spermatogenesis where JAM2 and JAM3, which are respectively expressed by Sertoli and germ cells, mediate an interaction between both cell types and play an essential role in the anchorage of germ cells onto Sertoli cells and the assembly of cell polarity complexes during spermatid differentiation. Also functions as an inhibitory somatodendritic cue that prevents the myelination of non-axonal parts of neurons. During myogenesis, it is involved in myocyte fusion. May also play a role in angiogenesis. The chain is Junctional adhesion molecule B from Mus musculus (Mouse).